The following is a 506-amino-acid chain: Maturase K (506 aa).

Belongs to the intron maturase 2 family. MatK subfamily.

The protein resides in the plastid. It is found in the chloroplast. Its function is as follows. Usually encoded in the trnK tRNA gene intron. Probably assists in splicing its own and other chloroplast group II introns. The protein is Maturase K of Pisum sativum (Garden pea).